Here is a 348-residue protein sequence, read N- to C-terminus: Autophagy-related protein 27 (348 aa).

The N-terminal stretch at 1 to 20 (MYRPDLLAFLLPLLAAPVFS) is a signal peptide. At 21 to 274 (AETLDCGKIR…DDGGDNSSSH (254 aa)) the chain is on the lumenal side. The MRH domain maps to 24–255 (LDCGKIRADG…TWHTKYACEK (232 aa)). 3 disulfides stabilise this stretch: Cys-26–Cys-69, Cys-82–Cys-89, and Cys-175–Cys-253. Residues Asn-61 and Asn-84 are each glycosylated (N-linked (GlcNAc...) asparagine). Positions 180 to 208 (EGTEGEWVSEEKYEKRADEKKDDDKKEDG) are enriched in basic and acidic residues. The disordered stretch occupies residues 180–219 (EGTEGEWVSEEKYEKRADEKKDDDKKEDGGDKDEGESTLE). Residues Asn-226 and Asn-270 are each glycosylated (N-linked (GlcNAc...) asparagine). A helical transmembrane segment spans residues 275–295 (WGFFTWFVLIAFLLIAGYLIF). The Cytoplasmic segment spans residues 296-348 (SSWINFTRYGARGWDLLPHSDTIRDIPYLLKDFIRRILNTVQGTGSRGGYSAV).

Belongs to the ATG27 family. In terms of assembly, forms a complex with ATG9 and ATG23.

The protein resides in the cytoplasmic vesicle membrane. The protein localises to the golgi apparatus membrane. It is found in the mitochondrion membrane. Its subcellular location is the preautophagosomal structure membrane. In terms of biological role, effector of VPS34 phosphatidylinositol 3-phosphate kinase signaling. Regulates the cytoplasm to vacuole transport (Cvt) vesicle formation. Plays a role in ATG protein retrieval from the pre-autophagosomal structure (PAS) and is especially required for autophagy-dependent cycling of ATG9. Autophagy is required for proper vegetative growth, asexual/sexual reproduction, and full virulence. Autophagy is particularly involved in the biosynthesis of deoxynivalenol (DON), an important virulence determinant. In Gibberella zeae (strain ATCC MYA-4620 / CBS 123657 / FGSC 9075 / NRRL 31084 / PH-1) (Wheat head blight fungus), this protein is Autophagy-related protein 27.